A 584-amino-acid chain; its full sequence is Arginine--tRNA ligase (584 aa).

A 'HIGH' region motif is present at residues 125 to 135; it reads PNIAKEMHVGH.

This sequence belongs to the class-I aminoacyl-tRNA synthetase family. In terms of assembly, monomer.

The protein localises to the cytoplasm. It catalyses the reaction tRNA(Arg) + L-arginine + ATP = L-arginyl-tRNA(Arg) + AMP + diphosphate. In Thermosynechococcus vestitus (strain NIES-2133 / IAM M-273 / BP-1), this protein is Arginine--tRNA ligase.